We begin with the raw amino-acid sequence, 565 residues long: Adenine deaminase (565 aa).

It belongs to the metallo-dependent hydrolases superfamily. Adenine deaminase family. Requires Mn(2+) as cofactor.

It catalyses the reaction adenine + H2O + H(+) = hypoxanthine + NH4(+). The chain is Adenine deaminase from Lactobacillus delbrueckii subsp. bulgaricus (strain ATCC 11842 / DSM 20081 / BCRC 10696 / JCM 1002 / NBRC 13953 / NCIMB 11778 / NCTC 12712 / WDCM 00102 / Lb 14).